A 274-amino-acid polypeptide reads, in one-letter code: Rhamnulose-1-phosphate aldolase (274 aa).

Residue glutamate 117 is part of the active site. Histidine 141, histidine 143, and histidine 212 together coordinate Zn(2+).

It belongs to the aldolase class II family. RhaD subfamily. As to quaternary structure, homotetramer. Zn(2+) is required as a cofactor.

It is found in the cytoplasm. The catalysed reaction is L-rhamnulose 1-phosphate = (S)-lactaldehyde + dihydroxyacetone phosphate. Its pathway is carbohydrate degradation; L-rhamnose degradation; glycerone phosphate from L-rhamnose: step 3/3. Functionally, catalyzes the reversible cleavage of L-rhamnulose-1-phosphate to dihydroxyacetone phosphate (DHAP) and L-lactaldehyde. The protein is Rhamnulose-1-phosphate aldolase of Shigella dysenteriae serotype 1 (strain Sd197).